The following is a 368-amino-acid chain: Ubiquitin domain-containing protein UBFD1 (368 aa).

The disordered stretch occupies residues 106–139; the sequence is SCDARGNLQPAPAQPPGDPAAQASVSNGEDAGGG. Positions 143–218 constitute a Ubiquitin-like domain; it reads ELVDLKIIWN…IMVVGSTIND (76 aa). Residues 231-263 are disordered; that stretch reads QDAKAEENKKEPLCRQKQHRKVLDKGKPEDVMP. Composition is skewed to basic and acidic residues over residues 233–244 and 251–260; these read AKAEENKKEPLC and KVLDKGKPED.

In Mus musculus (Mouse), this protein is Ubiquitin domain-containing protein UBFD1 (Ubfd1).